A 376-amino-acid polypeptide reads, in one-letter code: Putative glutamate--cysteine ligase 2 (376 aa).

It belongs to the glutamate--cysteine ligase type 2 family. YbdK subfamily.

The catalysed reaction is L-cysteine + L-glutamate + ATP = gamma-L-glutamyl-L-cysteine + ADP + phosphate + H(+). In terms of biological role, ATP-dependent carboxylate-amine ligase which exhibits weak glutamate--cysteine ligase activity. In Mycolicibacterium paratuberculosis (strain ATCC BAA-968 / K-10) (Mycobacterium paratuberculosis), this protein is Putative glutamate--cysteine ligase 2.